The sequence spans 100 residues: Urease subunit gamma (100 aa).

This sequence belongs to the urease gamma subunit family. In terms of assembly, heterotrimer of UreA (gamma), UreB (beta) and UreC (alpha) subunits. Three heterotrimers associate to form the active enzyme.

Its subcellular location is the cytoplasm. It carries out the reaction urea + 2 H2O + H(+) = hydrogencarbonate + 2 NH4(+). The protein operates within nitrogen metabolism; urea degradation; CO(2) and NH(3) from urea (urease route): step 1/1. This is Urease subunit gamma from Bacillus cereus (strain ATCC 10987 / NRS 248).